Consider the following 332-residue polypeptide: Cytochrome c1, heme protein, mitochondrial (332 aa).

The transit peptide at 1-70 (MLARTCLRST…YYHLYGFASA (70 aa)) directs the protein to the mitochondrion. Over 71–277 (MTPAEEGLHA…AEPEMDDRKR (207 aa)) the chain is Mitochondrial intermembrane. Residues 97-250 (QALRRGFQVY…GLVDYEDGTP (154 aa)) form the Cytochrome c domain. Positions 110, 113, and 114 each coordinate heme c. The segment covering 139-151 (EENEYDTEPNDQG) has biased composition (acidic residues). The segment at 139–162 (EENEYDTEPNDQGEIEKRPGKLSD) is disordered. Position 234 (Met-234) interacts with heme c. A helical transmembrane segment spans residues 278–296 (MGMKVLVVTSVLFALSVYV). Residues 297–332 (KRYKWAWLKSRKIVYDPPKSPPPATNLALPQQRAKS) are Mitochondrial matrix-facing.

It belongs to the cytochrome c family. As to quaternary structure, component of the ubiquinol-cytochrome c oxidoreductase (cytochrome b-c1 complex, complex III, CIII), a multisubunit enzyme composed of 10 subunits. The complex is composed of 3 respiratory subunits cytochrome b (cob), cytochrome c1 (cyt-1) and Rieske protein (fes-1), 2 core protein subunits pep and ucr-1, and 5 low-molecular weight protein subunits qcr6, qcr7, qcr8, qcr9 and probably NCU16844/qcr10. The complex exists as an obligatory dimer and forms supercomplexes (SCs) in the inner mitochondrial membrane with NADH-ubiquinone oxidoreductase (complex I, CI) and cytochrome c oxidase (complex IV, CIV), resulting in different assemblies (supercomplexes SCI(1)III(2), SCIII(2)IV(1) and SCIII(2)IV(2) as well as higher order I(x)III(y)IV(z) megacomplexes). The cofactor is heme c.

Its subcellular location is the mitochondrion inner membrane. It carries out the reaction a quinol + 2 Fe(III)-[cytochrome c](out) = a quinone + 2 Fe(II)-[cytochrome c](out) + 2 H(+)(out). Component of the ubiquinol-cytochrome c oxidoreductase, a multisubunit transmembrane complex that is part of the mitochondrial electron transport chain which drives oxidative phosphorylation. The respiratory chain contains 3 multisubunit complexes succinate dehydrogenase (complex II, CII), ubiquinol-cytochrome c oxidoreductase (cytochrome b-c1 complex, complex III, CIII) and cytochrome c oxidase (complex IV, CIV), that cooperate to transfer electrons derived from NADH and succinate to molecular oxygen, creating an electrochemical gradient over the inner membrane that drives transmembrane transport and the ATP synthase. The cytochrome b-c1 complex catalyzes electron transfer from ubiquinol to cytochrome c, linking this redox reaction to translocation of protons across the mitochondrial inner membrane, with protons being carried across the membrane as hydrogens on the quinol. In the process called Q cycle, 2 protons are consumed from the matrix, 4 protons are released into the intermembrane space and 2 electrons are passed to cytochrome c. Cytochrome c1 is a catalytic core subunit containing a c-type heme. It transfers electrons from the [2Fe-2S] iron-sulfur cluster of the Rieske protein to cytochrome c. In Neurospora crassa (strain ATCC 24698 / 74-OR23-1A / CBS 708.71 / DSM 1257 / FGSC 987), this protein is Cytochrome c1, heme protein, mitochondrial (cyt-1).